Here is a 177-residue protein sequence, read N- to C-terminus: Large ribosomal subunit protein uL6 (177 aa).

This sequence belongs to the universal ribosomal protein uL6 family. In terms of assembly, part of the 50S ribosomal subunit.

In terms of biological role, this protein binds to the 23S rRNA, and is important in its secondary structure. It is located near the subunit interface in the base of the L7/L12 stalk, and near the tRNA binding site of the peptidyltransferase center. The protein is Large ribosomal subunit protein uL6 of Aeromonas salmonicida (strain A449).